The primary structure comprises 307 residues: Aspartate carbamoyltransferase catalytic subunit (307 aa).

Carbamoyl phosphate contacts are provided by R59 and T60. K87 contributes to the L-aspartate binding site. 3 residues coordinate carbamoyl phosphate: R109, H137, and Q140. L-aspartate contacts are provided by R170 and R224. Positions 265 and 266 each coordinate carbamoyl phosphate.

It belongs to the aspartate/ornithine carbamoyltransferase superfamily. ATCase family. In terms of assembly, heterododecamer (2C3:3R2) of six catalytic PyrB chains organized as two trimers (C3), and six regulatory PyrI chains organized as three dimers (R2).

The enzyme catalyses carbamoyl phosphate + L-aspartate = N-carbamoyl-L-aspartate + phosphate + H(+). The protein operates within pyrimidine metabolism; UMP biosynthesis via de novo pathway; (S)-dihydroorotate from bicarbonate: step 2/3. Catalyzes the condensation of carbamoyl phosphate and aspartate to form carbamoyl aspartate and inorganic phosphate, the committed step in the de novo pyrimidine nucleotide biosynthesis pathway. This is Aspartate carbamoyltransferase catalytic subunit from Cytophaga hutchinsonii (strain ATCC 33406 / DSM 1761 / CIP 103989 / NBRC 15051 / NCIMB 9469 / D465).